Reading from the N-terminus, the 291-residue chain is Transcription factor bHLH53 (291 aa).

Residues 163-212 (PTLSSQSIAARGRRRRIAEKTHELGKLIPGGNKLNTAEMFQAAAKYVKFL) enclose the bHLH domain.

Homodimer. In terms of tissue distribution, expressed constitutively in roots, leaves, stems, and flowers.

It localises to the nucleus. This is Transcription factor bHLH53 (BHLH53) from Arabidopsis thaliana (Mouse-ear cress).